A 544-amino-acid polypeptide reads, in one-letter code: Lariat debranching enzyme (544 aa).

Residues C8, H10, D39, and N84 each coordinate a divalent metal cation. The interval 124 to 154 (SGIFKSHDYRKGHFECPPYNSSTIRSIYHVR) is lariat recognition loop. K128 is subject to N6-acetyllysine. The a divalent metal cation site is built by H174, H226, and H228. A compositionally biased stretch (acidic residues) spans 395 to 412 (EYEEQDDVESNDSGEDQS). The segment at 395–463 (EYEEQDDVES…PSDQASEFSA (69 aa)) is disordered. The segment covering 413 to 425 (EYNTDTSALSSIN) has biased composition (polar residues). The segment covering 429 to 439 (IMLDEEEDEDS) has biased composition (acidic residues). Over residues 445 to 463 (SGMNTPSVEPSDQASEFSA) the composition is skewed to polar residues. 7 positions are modified to phosphoserine: S464, S474, S478, S479, S485, S499, and S514. The segment at 476-544 (IVSSDDTVDS…AVDDDDDDAA (69 aa)) is disordered. Residues 512 to 522 (RLSDEHEPEQR) are compositionally biased toward basic and acidic residues.

The protein belongs to the lariat debranching enzyme family. It depends on Fe(2+) as a cofactor. Zn(2+) serves as cofactor. The cofactor is Mn(2+). Ubiquitously expressed, strongest expression in the spinal cord and brainstem.

It localises to the nucleus. With respect to regulation, active in presence of diverse metals including Fe(2+), Zn(2+), Mn(2+). Also activated by Ca(2+). Binds two metal cations in two adjacent alpha and beta metal-binding pockets. Cleaves the 2'-5' phosphodiester linkage at the branch point of excised lariat intron RNA and converts them into linear molecules that can be subsequently degraded, thereby facilitating ribonucleotide turnover. Linked to its role in pre-mRNA processing mechanism, may also participate in retrovirus replication via an RNA lariat intermediate in cDNA synthesis and have an antiviral cell-intrinsic defense function in the brainstem. The protein is Lariat debranching enzyme (DBR1) of Homo sapiens (Human).